We begin with the raw amino-acid sequence, 314 residues long: Putative gluconeogenesis factor (314 aa).

The protein belongs to the gluconeogenesis factor family.

The protein localises to the cytoplasm. Required for morphogenesis under gluconeogenic growth conditions. The sequence is that of Putative gluconeogenesis factor from Thermotoga maritima (strain ATCC 43589 / DSM 3109 / JCM 10099 / NBRC 100826 / MSB8).